Consider the following 413-residue polypeptide: NADH:flavin oxidoreductase FG08077 (413 aa).

FMN is bound at residue 53–56 (APLC). Tyrosine 58 is a substrate binding site. FMN-binding residues include alanine 88 and glutamine 130. 211-214 (HAAH) provides a ligand contact to substrate. FMN is bound by residues arginine 264 and 370–371 (GR).

It belongs to the NADH:flavin oxidoreductase/NADH oxidase family. NamA subfamily. FMN is required as a cofactor.

The protein operates within mycotoxin biosynthesis. Functionally, NADH:flavin oxidoreductase; part of the gene cluster that mediates the biosynthesis of butenolide, a mycotoxin that shows antibiotic activity but does not seem to play a major role in the spread of head blight in wheat. Butenolide is derived from glutamic acid via a 4-acetamido-2-butenoic acid intermediate. The predicted function of the NADH:flavin oxidoreductase FG08077, the cytochrome P450 monooxygenase FG08079, the decarboxylase FG08083, and the putative acetyltransferase FG08082 are consistent with this pathway, however, the respective activities of the butelonide biosynthesis cluster enzymes have still to be experimentally determined. This Gibberella zeae (strain ATCC MYA-4620 / CBS 123657 / FGSC 9075 / NRRL 31084 / PH-1) (Wheat head blight fungus) protein is NADH:flavin oxidoreductase FG08077.